We begin with the raw amino-acid sequence, 906 residues long: Cadherin-2 (906 aa).

A signal peptide spans methionine 1–alanine 25. Residues serine 26 to arginine 159 constitute a propeptide that is removed on maturation. Cadherin domains lie at aspartate 160–phenylalanine 267, leucine 268–phenylalanine 382, threonine 383–phenylalanine 497, alanine 498–proline 603, and glutamine 604–glycine 717. The Extracellular portion of the chain corresponds to aspartate 160–alanine 724. Position 170 (glutamate 170) interacts with Ca(2+). N-linked (GlcNAc...) asparagine glycosylation occurs at asparagine 190. Positions 226, 228, 259, 260, 261, 262, and 263 each coordinate Ca(2+). Residue asparagine 273 is glycosylated (N-linked (GlcNAc...) asparagine). Residues aspartate 293, aspartate 295, and asparagine 301 each coordinate Ca(2+). A glycan (N-linked (GlcNAc...) asparagine) is linked at asparagine 325. Residue aspartate 353 coordinates Ca(2+). Residues asparagine 402, asparagine 572, asparagine 651, and asparagine 692 are each glycosylated (N-linked (GlcNAc...) asparagine). The chain crosses the membrane as a helical span at residues isoleucine 725–tryptophan 745. Topologically, residues methionine 746–aspartate 906 are cytoplasmic. Over residues serine 863–glycine 880 the composition is skewed to low complexity. Residues serine 863–aspartate 883 form a disordered region.

As to quaternary structure, homodimer (via extracellular region). Can also form heterodimers with other cadherins (via extracellular region). Dimerization occurs in trans, i.e. with a cadherin chain from another cell. Interacts with CDCP1. Interacts with PCDH8; this complex may also include TAOK2. The interaction with PCDH8 may lead to internalization through TAOK2/p38 MAPK pathway. Identified in a complex containing FGFR4, NCAM1, CDH2, PLCG1, FRS2, SRC, SHC1, GAP43 and CTTN. May interact with OBSCN (via protein kinase domain 2). Interacts with FBXO45. In terms of processing, cleaved by MMP24. Ectodomain cleavage leads to the generation of a soluble 90 kDa N-terminal soluble fragment and a 45 kDa membrane-bound C-terminal fragment 1 (CTF1), which is further cleaved by gamma-secretase into a 35 kDa. Cleavage in neural stem cells by MMP24 affects CDH2-mediated anchorage of neural stem cells to ependymocytes in the adult subependymal zone, leading to modulate neural stem cell quiescence. May be phosphorylated by OBSCN. Post-translationally, O-glycosylated on Ser and Thr residues. As to expression, expressed in cardiac muscle (at protein level).

Its subcellular location is the cell membrane. It is found in the sarcolemma. The protein localises to the cell junction. It localises to the adherens junction. The protein resides in the desmosome. Its subcellular location is the cell surface. Functionally, calcium-dependent cell adhesion protein; preferentially mediates homotypic cell-cell adhesion by dimerization with a CDH2 chain from another cell. Cadherins may thus contribute to the sorting of heterogeneous cell types. Acts as a regulator of neural stem cells quiescence by mediating anchorage of neural stem cells to ependymocytes in the adult subependymal zone: upon cleavage by MMP24, CDH2-mediated anchorage is affected, leading to modulate neural stem cell quiescence. Plays a role in cell-to-cell junction formation between pancreatic beta cells and neural crest stem (NCS) cells, promoting the formation of processes by NCS cells. Required for proper neurite branching. Required for pre- and postsynaptic organization. CDH2 may be involved in neuronal recognition mechanism. In hippocampal neurons, may regulate dendritic spine density. The sequence is that of Cadherin-2 (Cdh2) from Mus musculus (Mouse).